The following is a 317-amino-acid chain: MQYIELLIMFLSVLLAVAFLTVAERKTLGYMQRRVGPNAVGYYGILMAIADAAKLLLKEIVVPTHADKLILFVSPMISLISALLCWSVIPFAPGVTIYDSNYGFILTLAISSVGVFGTLLAGWSANSKYSLLGSIRSTAQLISYELVLTTIILLCILIGGTMNVSKYIEIQQAIWYGIPLLPLAIIFFIGCVAECARPPFDNVEAESELVSGHMTEYSSSIFVLFFLSEYASILFLSTLTAILFMGGGTGIILGLKANLFAFTYIWVRATLPRVRYDKLINLCWMIFLPILFGSAIAVPAYLYALDAIIILYRPGGL.

The next 9 helical transmembrane spans lie at 3–23, 37–57, 69–89, 103–123, 141–161, 173–193, 207–227, 247–267, and 282–302; these read YIELLIMFLSVLLAVAFLTVA, PNAVGYYGILMAIADAAKLLL, LILFVSPMISLISALLCWSVI, GFILTLAISSVGVFGTLLAGW, LISYELVLTTIILLCILIGGT, AIWYGIPLLPLAIIFFIGCVA, SELVSGHMTEYSSSIFVLFFL, GGTGIILGLKANLFAFTYIWV, and LCWMIFLPILFGSAIAVPAYL.

It belongs to the complex I subunit 1 family.

Its subcellular location is the mitochondrion inner membrane. It catalyses the reaction a ubiquinone + NADH + 5 H(+)(in) = a ubiquinol + NAD(+) + 4 H(+)(out). Its function is as follows. Core subunit of the mitochondrial membrane respiratory chain NADH dehydrogenase (Complex I) that is believed to belong to the minimal assembly required for catalysis. Complex I functions in the transfer of electrons from NADH to the respiratory chain. The immediate electron acceptor for the enzyme is believed to be ubiquinone. The chain is NADH-ubiquinone oxidoreductase chain 1 (NAD1) from Candida albicans (strain SC5314 / ATCC MYA-2876) (Yeast).